Consider the following 543-residue polypeptide: Chaperonin GroEL 1 (543 aa).

ATP-binding positions include 30 to 33 (TLGP), K51, 87 to 91 (DGTTT), G415, and D496.

Belongs to the chaperonin (HSP60) family. In terms of assembly, forms a cylinder of 14 subunits composed of two heptameric rings stacked back-to-back. Interacts with the co-chaperonin GroES.

The protein resides in the cytoplasm. It catalyses the reaction ATP + H2O + a folded polypeptide = ADP + phosphate + an unfolded polypeptide.. In terms of biological role, together with its co-chaperonin GroES, plays an essential role in assisting protein folding. The GroEL-GroES system forms a nano-cage that allows encapsulation of the non-native substrate proteins and provides a physical environment optimized to promote and accelerate protein folding. The sequence is that of Chaperonin GroEL 1 from Mesorhizobium japonicum (strain LMG 29417 / CECT 9101 / MAFF 303099) (Mesorhizobium loti (strain MAFF 303099)).